The sequence spans 518 residues: Wax ester synthase/diacylglycerol acyltransferase 6 (518 aa).

Positions 1 to 17 are enriched in basic and acidic residues; the sequence is MEIKTRRDTSETSVRKD. The interval 1 to 29 is disordered; that stretch reads MEIKTRRDTSETSVRKDDEEEVEEEQPLS. Over 1–213 the chain is Cytoplasmic; it reads MEIKTRRDTS…LMAGSRGDSR (213 aa). Histidine 163 (proton acceptor) is an active-site residue. Positions 185–205 are disordered; it reads PDELPSLPNQNRSSSRSSRLM. A helical membrane pass occupies residues 214 to 234; that stretch reads FLWLVMVIWSAIMLVLNTVCD. The Lumenal segment spans residues 235–518; it reads ALEFIATTMF…VQERDSRSLD (284 aa). A glycan (N-linked (GlcNAc...) asparagine) is linked at asparagine 430.

It in the N-terminal section; belongs to the long-chain O-acyltransferase family. As to expression, expressed in roots, stems, leaves, flowers and siliques.

It is found in the cell membrane. Its subcellular location is the endoplasmic reticulum membrane. It localises to the golgi apparatus membrane. It carries out the reaction an acyl-CoA + a 1,2-diacyl-sn-glycerol = a triacyl-sn-glycerol + CoA. It catalyses the reaction a long chain fatty alcohol + a fatty acyl-CoA = a wax ester + CoA. Its pathway is glycerolipid metabolism; triacylglycerol biosynthesis. The protein operates within lipid metabolism. Bifunctional wax ester synthase/diacylglycerol acyltransferase that uses acyl-CoAs with 16, 18 and 20 carbons as substrates, preferably in combination with 16:0ol alcohol. Involved in cuticular wax biosynthesis. This chain is Wax ester synthase/diacylglycerol acyltransferase 6, found in Arabidopsis thaliana (Mouse-ear cress).